Here is a 332-residue protein sequence, read N- to C-terminus: Malate dehydrogenase (332 aa).

An NAD(+)-binding site is contributed by 15–21; that stretch reads GAAGHIG. Residues Arg-96 and Arg-102 each coordinate substrate. Residues Asn-109 and 133-135 each bind NAD(+); that span reads VGN. Residues Asn-135 and Arg-166 each coordinate substrate. His-191 acts as the Proton acceptor in catalysis.

It belongs to the LDH/MDH superfamily. MDH type 2 family.

The enzyme catalyses (S)-malate + NAD(+) = oxaloacetate + NADH + H(+). In terms of biological role, catalyzes the reversible oxidation of malate to oxaloacetate. The sequence is that of Malate dehydrogenase from Mycolicibacterium vanbaalenii (strain DSM 7251 / JCM 13017 / BCRC 16820 / KCTC 9966 / NRRL B-24157 / PYR-1) (Mycobacterium vanbaalenii).